We begin with the raw amino-acid sequence, 270 residues long: Hematopoietically-expressed homeobox protein HHEX (270 aa).

An interaction with SOX13 region spans residues 1–137 (MQYPHPGPAA…PFLQRPLHKR (137 aa)). At S53 the chain carries Phosphoserine. The segment at residues 137-196 (RKGGQVRFSNDQTIELEKKFETQKYLSPPERKRLAKMLQLSERQVKTWFQNRRAKWRRLK) is a DNA-binding region (homeobox). Positions 137–270 (RKGGQVRFSN…EGDKSYFNAG (134 aa)) are required for WNT signaling induction. The disordered stretch occupies residues 194–270 (RLKQENPQSN…EGDKSYFNAG (77 aa)). A compositionally biased stretch (polar residues) spans 222–241 (PSEQNKGASLDSSQCSPSPA). The span at 244–260 (EDLESEISEDSDQEVDI) shows a compositional bias: acidic residues.

Interacts with CD81; the interaction prevents nuclear translocation of HHEX. Interacts (via N-terminus) with SOX13; abolishes the SOX13-mediated inhibition of WNT-mediated transcriptional activity via competitive inhibition of the SOX13-TCF7 complex. Interacts with EIF4E; the interaction inhibits EIF4E-mediated mRNA nuclear export. In terms of tissue distribution, liver and promyelocytic leukemia cell line HL-60.

Its subcellular location is the nucleus. It localises to the nuclear body. The protein localises to the cytoplasm. In terms of biological role, recognizes the DNA sequence 5'-ATTAA-3'. Transcriptional repressor. Activator of WNT-mediated transcription in conjunction with CTNNB1. Establishes anterior identity at two levels; acts early to enhance canonical WNT-signaling by repressing expression of TLE4, and acts later to inhibit NODAL-signaling by directly targeting NODAL. Inhibits EIF4E-mediated mRNA nuclear export. May play a role in hematopoietic differentiation. The polypeptide is Hematopoietically-expressed homeobox protein HHEX (HHEX) (Homo sapiens (Human)).